The following is a 600-amino-acid chain: ATP-dependent lipid A-core flippase (600 aa).

4 helical membrane passes run 26 to 46 (VGIFLLSIIGFVIFASTQPML), 82 to 102 (LLIVLIAAWQGLGSFLGNYFL), 167 to 187 (VFLFIYLLMMNWKLTLVMLAI), and 266 to 286 (PMLQLVIYSAMAVLMFLVLFL). Residues 30 to 321 (LLSIIGFVIF…LSEVSSTIQK (292 aa)) form the ABC transmembrane type-1 domain. The region spanning 353 to 589 (LEVKNLSFFY…NGYYARLHAM (237 aa)) is the ABC transporter domain. An ATP-binding site is contributed by 387-394 (GRSGSGKS).

The protein belongs to the ABC transporter superfamily. Lipid exporter (TC 3.A.1.106) family. As to quaternary structure, homodimer.

The protein localises to the cell inner membrane. The enzyme catalyses ATP + H2O + lipid A-core oligosaccharideSide 1 = ADP + phosphate + lipid A-core oligosaccharideSide 2.. Functionally, involved in lipopolysaccharide (LPS) biosynthesis. Translocates lipid A-core from the inner to the outer leaflet of the inner membrane. Transmembrane domains (TMD) form a pore in the inner membrane and the ATP-binding domain (NBD) is responsible for energy generation. The sequence is that of ATP-dependent lipid A-core flippase from Pseudomonas savastanoi pv. phaseolicola (strain 1448A / Race 6) (Pseudomonas syringae pv. phaseolicola (strain 1448A / Race 6)).